Here is a 214-residue protein sequence, read N- to C-terminus: Outer-membrane lipoprotein LolB (214 aa).

Residues 1 to 25 form the signal peptide; it reads MNNLKRLTKTIFSCFTLSALLLLAG. Cys26 carries N-palmitoyl cysteine lipidation. The S-diacylglycerol cysteine moiety is linked to residue Cys26.

Belongs to the LolB family. As to quaternary structure, monomer.

The protein resides in the cell outer membrane. Its function is as follows. Plays a critical role in the incorporation of lipoproteins in the outer membrane after they are released by the LolA protein. The protein is Outer-membrane lipoprotein LolB of Shewanella baltica (strain OS155 / ATCC BAA-1091).